The primary structure comprises 118 residues: Small ribosomal subunit protein uS13 (118 aa).

Residues 99-118 (GQRTRTNARTRKGPRKAIKK) are disordered.

This sequence belongs to the universal ribosomal protein uS13 family. In terms of assembly, part of the 30S ribosomal subunit. Forms a loose heterodimer with protein S19. Forms two bridges to the 50S subunit in the 70S ribosome.

Located at the top of the head of the 30S subunit, it contacts several helices of the 16S rRNA. In the 70S ribosome it contacts the 23S rRNA (bridge B1a) and protein L5 of the 50S subunit (bridge B1b), connecting the 2 subunits; these bridges are implicated in subunit movement. Contacts the tRNAs in the A and P-sites. This Xylella fastidiosa (strain M23) protein is Small ribosomal subunit protein uS13.